Reading from the N-terminus, the 148-residue chain is Large ribosomal subunit protein bL9 (148 aa).

The protein belongs to the bacterial ribosomal protein bL9 family.

Functionally, binds to the 23S rRNA. This Bifidobacterium adolescentis (strain ATCC 15703 / DSM 20083 / NCTC 11814 / E194a) protein is Large ribosomal subunit protein bL9.